Reading from the N-terminus, the 110-residue chain is Large ribosomal subunit protein uL24 (110 aa).

Belongs to the universal ribosomal protein uL24 family. Part of the 50S ribosomal subunit.

Functionally, one of two assembly initiator proteins, it binds directly to the 5'-end of the 23S rRNA, where it nucleates assembly of the 50S subunit. One of the proteins that surrounds the polypeptide exit tunnel on the outside of the subunit. This is Large ribosomal subunit protein uL24 from Roseiflexus castenholzii (strain DSM 13941 / HLO8).